The sequence spans 332 residues: DNA-directed RNA polymerase subunit alpha (332 aa).

The segment at 1-227 (MKKFAETPFL…VMYSQMSVFN (227 aa)) is alpha N-terminal domain (alpha-NTD). Residues 248–332 (KELVIRIDDL…LRRKLEQLKA (85 aa)) form an alpha C-terminal domain (alpha-CTD) region.

Belongs to the RNA polymerase alpha chain family. In terms of assembly, homodimer. The RNAP catalytic core consists of 2 alpha, 1 beta, 1 beta' and 1 omega subunit. When a sigma factor is associated with the core the holoenzyme is formed, which can initiate transcription.

The enzyme catalyses RNA(n) + a ribonucleoside 5'-triphosphate = RNA(n+1) + diphosphate. Functionally, DNA-dependent RNA polymerase catalyzes the transcription of DNA into RNA using the four ribonucleoside triphosphates as substrates. This is DNA-directed RNA polymerase subunit alpha from Aliarcobacter butzleri (strain RM4018) (Arcobacter butzleri).